The primary structure comprises 379 residues: Multicilin (379 aa).

Disordered stretches follow at residues 26–46 and 87–106; these read SRRS…PWKS and LLGT…NPSL. Residues 175–223 are a coiled coil; that stretch reads EQYWKEVADQNQRALGTALIENNQLHVTLTQKQEEIASLRERNVQLKEL. A compositionally biased stretch (basic and acidic residues) spans 289-309; it reads LQNRDPKRPRLQQEPDSKDCS. Residues 289-311 form a disordered region; sequence LQNRDPKRPRLQQEPDSKDCSTR.

Belongs to the geminin family. As to quaternary structure, heterodimer (via coiled-coil domain) with GMNN (via coiled-coil domain); targets GMNN to the nucleus. Can form homodimers (in vitro, via coiled-coil domain), but these are much less stable than the heterodimer formed with GMNN.

Its subcellular location is the nucleus. Its function is as follows. Transcription regulator specifically required for multiciliate cell differentiation. Acts in a multiprotein complex containing E2F4 and E2F5 that binds and activates genes required for centriole biogenesis. Required for the deuterosome-mediated acentriolar pathway. Plays a role in mitotic cell cycle progression by promoting cell cycle exit. Modulates GMNN activity by reducing its affinity for CDT1. This Rattus norvegicus (Rat) protein is Multicilin (Mcidas).